The sequence spans 243 residues: Carboxy-S-adenosyl-L-methionine synthase (243 aa).

Residues tyrosine 35, 68–70, 92–93, and arginine 199 each bind S-adenosyl-L-methionine; these read GCS and DN.

This sequence belongs to the class I-like SAM-binding methyltransferase superfamily. Cx-SAM synthase family. Homodimer.

It carries out the reaction prephenate + S-adenosyl-L-methionine = carboxy-S-adenosyl-L-methionine + 3-phenylpyruvate + H2O. In terms of biological role, catalyzes the conversion of S-adenosyl-L-methionine (SAM) to carboxy-S-adenosyl-L-methionine (Cx-SAM). In Helicobacter pylori (strain J99 / ATCC 700824) (Campylobacter pylori J99), this protein is Carboxy-S-adenosyl-L-methionine synthase.